We begin with the raw amino-acid sequence, 375 residues long: Putative nuclease YhcG (375 aa).

In terms of assembly, interacts with DNA processing enzymes, including the restriction complex HsdMRS, the integrases IntF and IntS, and the recombinase PinE.

May be a nuclease involved in DNA recombination and repair. This chain is Putative nuclease YhcG (yhcG), found in Escherichia coli (strain K12).